The primary structure comprises 154 residues: Interleukin-2 (154 aa).

Positions 1–20 are cleaved as a signal peptide; it reads MYRMQLLSCIALSLALVTNS. O-linked (GalNAc...) threonine glycosylation is present at Thr-23. Cys-78 and Cys-126 are joined by a disulfide.

Belongs to the IL-2 family.

It is found in the secreted. In terms of biological role, cytokine produced by activated CD4-positive helper T-cells and to a lesser extend activated CD8-positive T-cells and natural killer (NK) cells that plays pivotal roles in the immune response and tolerance. Binds to a receptor complex composed of either the high-affinity trimeric IL-2R (IL2RA/CD25, IL2RB/CD122 and IL2RG/CD132) or the low-affinity dimeric IL-2R (IL2RB and IL2RG). Interaction with the receptor leads to oligomerization and conformation changes in the IL-2R subunits resulting in downstream signaling starting with phosphorylation of JAK1 and JAK3. In turn, JAK1 and JAK3 phosphorylate the receptor to form a docking site leading to the phosphorylation of several substrates including STAT5. This process leads to activation of several pathways including STAT, phosphoinositide-3-kinase/PI3K and mitogen-activated protein kinase/MAPK pathways. Functions as a T-cell growth factor and can increase NK-cell cytolytic activity as well. Promotes strong proliferation of activated B-cells and subsequently immunoglobulin production. Plays a pivotal role in regulating the adaptive immune system by controlling the survival and proliferation of regulatory T-cells, which are required for the maintenance of immune tolerance. Moreover, participates in the differentiation and homeostasis of effector T-cell subsets, including Th1, Th2, Th17 as well as memory CD8-positive T-cells. This Macaca mulatta (Rhesus macaque) protein is Interleukin-2 (IL2).